Here is a 102-residue protein sequence, read N- to C-terminus: Cuticle protein AM/CP1114 (102 aa).

Residues 16–81 (DGNFHYSFET…VESPLLPSIP (66 aa)) form the Chitin-binding type R&amp;R domain. The span at 23–33 (FETSNGIQDTK) shows a compositional bias: polar residues. A disordered region spans residues 23–50 (FETSNGIQDTKTGVPGSAGQSNMNGDFS).

Arthrodial membrane and calcified shell.

The protein is Cuticle protein AM/CP1114 of Cancer pagurus (Rock crab).